Here is a 338-residue protein sequence, read N- to C-terminus: Terpene synthase 1 (338 aa).

The short motif at 80–85 (DDALDS) is the DDxx(x)D/E motif element. An NDxxSxxxD/E motif motif is present at residues 220-228 (NDLVSYEKE).

It belongs to the terpene synthase family.

It carries out the reaction (2E,6E)-farnesyl diphosphate = (2S,3R,6S,9S)-(-)-protoillud-7-ene + diphosphate. Terpene synthase that converts its substrate farnesyl diphosphate (FPP) into the sesquiterpene protoillud-7-ene. This is Terpene synthase 1 from Cavenderia fasciculata (Slime mold).